Here is a 143-residue protein sequence, read N- to C-terminus: MRLNTISPSKGAKHSSKRLGRGIGSGLGKTSGRGHKGQKARSGCSIHRGFEGGQTPLYRRLPKFGFTSCKATVTTEIRLADLSKLQDNLIDLKTLKKANIIPKKIKWVKIILTGDIKRAITVRSLRVSKGAKLAIEAAGGKIE.

Residues 1 to 48 (MRLNTISPSKGAKHSSKRLGRGIGSGLGKTSGRGHKGQKARSGCSIHR) are disordered. Positions 11–20 (GAKHSSKRLG) are enriched in basic residues. Over residues 21-31 (RGIGSGLGKTS) the composition is skewed to gly residues.

This sequence belongs to the universal ribosomal protein uL15 family. In terms of assembly, part of the 50S ribosomal subunit.

Functionally, binds to the 23S rRNA. The polypeptide is Large ribosomal subunit protein uL15 (Baumannia cicadellinicola subsp. Homalodisca coagulata).